We begin with the raw amino-acid sequence, 350 residues long: Inhibin beta E chain (350 aa).

The signal sequence occupies residues 1 to 19 (MRLPDVQLWLVLLWALVRA). Positions 20–236 (QGTGSVCPSC…EPGAGRARRR (217 aa)) are excised as a propeptide. Asn-198 carries an N-linked (GlcNAc...) asparagine glycan. 4 disulfide bridges follow: Cys-240–Cys-248, Cys-247–Cys-315, Cys-276–Cys-347, and Cys-280–Cys-349.

The protein belongs to the TGF-beta family. In terms of assembly, homodimeric or heterodimeric through association with alpha and beta subunits, linked by one or more disulfide bonds. Inhibins are heterodimers of one alpha and one beta subunit. Activins are homo- or heterodimers of beta subunits only.

The protein resides in the secreted. Inhibins and activins inhibit and activate, respectively, the secretion of follitropin by the pituitary gland. Inhibins/activins are involved in regulating a number of diverse functions such as hypothalamic and pituitary hormone secretion, gonadal hormone secretion, germ cell development and maturation, erythroid differentiation, insulin secretion, nerve cell survival, embryonic axial development or bone growth, depending on their subunit composition. Inhibins appear to oppose the functions of activins. Functionally, activin E is a homodimer of INHBE secreted by the liver that plays a crucial role in regulating metabolic homeostasis particularly in lipid metabolism and energy homeostasis. Plays a central role in the regulation of adipose tissue lipolysis by preventing the influx of fatty acids from adipose tissue into the liver. Mechanistically, signals via ACVR1C to activate SMAD2/3 signaling, suppressing PPARG target genes in adipose tissue, thereby reducing liver lipid content and improving glycemic control. Induces beige adipocyte formation and thermogenesis in response to cold exposure. The chain is Inhibin beta E chain (INHBE) from Homo sapiens (Human).